The following is a 208-amino-acid chain: Ribosomal RNA small subunit methyltransferase G (208 aa).

S-adenosyl-L-methionine is bound by residues Gly-78, Phe-83, 101–103, 129–130, and Arg-142; these read ERS and IE.

The protein belongs to the methyltransferase superfamily. RNA methyltransferase RsmG family.

It is found in the cytoplasm. Specifically methylates the N7 position of a guanine in 16S rRNA. The chain is Ribosomal RNA small subunit methyltransferase G from Borreliella burgdorferi (strain ATCC 35210 / DSM 4680 / CIP 102532 / B31) (Borrelia burgdorferi).